The primary structure comprises 100 residues: MIMKYFCSVMIAIALVGCTATPPPTQKAQQSKVSPTRTLDMEALCKAQAAQRYNTGAQKIAVTGFEQFQGSYEMRGNTFRKESFVCSFDADGQFLHLSMR.

The N-terminal stretch at Met1–Gly17 is a signal peptide. Cys18 carries N-palmitoyl cysteine lipidation. Cys18 carries S-diacylglycerol cysteine lipidation.

It localises to the cell membrane. This is an uncharacterized protein from Salmonella choleraesuis (strain SC-B67).